The sequence spans 225 residues: 7-cyano-7-deazaguanine synthase (225 aa).

7-17 lines the ATP pocket; it reads LSGGMDSTTLL. The Zn(2+) site is built by C183, C191, C194, and C197.

It belongs to the QueC family. As to quaternary structure, homodimer. The cofactor is Zn(2+).

It catalyses the reaction 7-carboxy-7-deazaguanine + NH4(+) + ATP = 7-cyano-7-deazaguanine + ADP + phosphate + H2O + H(+). The protein operates within purine metabolism; 7-cyano-7-deazaguanine biosynthesis. Catalyzes the ATP-dependent conversion of 7-carboxy-7-deazaguanine (CDG) to 7-cyano-7-deazaguanine (preQ(0)). This chain is 7-cyano-7-deazaguanine synthase, found in Caldicellulosiruptor saccharolyticus (strain ATCC 43494 / DSM 8903 / Tp8T 6331).